Reading from the N-terminus, the 171-residue chain is MPDNHKDPPDFNNLEMKLEERIELSREDQDIQSTSSSYPHCEALDHIVSMESTYDFHRQMAHKDLQKHRQEYEKASEKILELRKKLTDWNMDPKKRKWIEDDLDSLVRKQESALSRIRLAEKCTKRDLRNDPPPAYQPDDPLKDLRKNFEKKEKPTWNDVEKKKNGVFEFH.

The interval 123-171 (CTKRDLRNDPPPAYQPDDPLKDLRKNFEKKEKPTWNDVEKKKNGVFEFH) is disordered. A compositionally biased stretch (basic and acidic residues) spans 140–171 (DPLKDLRKNFEKKEKPTWNDVEKKKNGVFEFH).

This is an uncharacterized protein from Caenorhabditis elegans.